The chain runs to 119 residues: uncharacterized protein (119 aa).

Residues leucine 55–asparagine 119 are disordered. Over residues leucine 81–threonine 92 the composition is skewed to polar residues.

This is an uncharacterized protein from Saccharomyces cerevisiae (strain ATCC 204508 / S288c) (Baker's yeast).